The chain runs to 213 residues: MTDTTSMKHQTPLTSGDFTAADEPFALFETWLNEAIKSEPNDPNAMALATVDPDGLPDVRMVLMKGFDTEGFVFYSHIASQKGRELAANPKAALLFHWKSLRRQVRIRGNVTPVTDAEADAYFATRPKQAQIGAWASKQSEALESRFAFEQAIAKVAAKYIIGEVPRPPGWSGWRITPVRIEFWHDRPFRLHDRIEFRRDAAGQKWSKTRMYP.

Residues Arg-60 to Lys-65, Tyr-75 to Ser-76, Lys-82, and Gln-104 each bind FMN. Position 65 (Lys-65) interacts with substrate. Substrate contacts are provided by Tyr-122 and Arg-126. Residues Gln-139–Ser-140 and Trp-184 contribute to the FMN site. Arg-190–His-192 lines the substrate pocket. Position 194 (Arg-194) interacts with FMN.

The protein belongs to the pyridoxamine 5'-phosphate oxidase family. As to quaternary structure, homodimer. FMN is required as a cofactor.

The enzyme catalyses pyridoxamine 5'-phosphate + O2 + H2O = pyridoxal 5'-phosphate + H2O2 + NH4(+). It catalyses the reaction pyridoxine 5'-phosphate + O2 = pyridoxal 5'-phosphate + H2O2. It participates in cofactor metabolism; pyridoxal 5'-phosphate salvage; pyridoxal 5'-phosphate from pyridoxamine 5'-phosphate: step 1/1. The protein operates within cofactor metabolism; pyridoxal 5'-phosphate salvage; pyridoxal 5'-phosphate from pyridoxine 5'-phosphate: step 1/1. Its function is as follows. Catalyzes the oxidation of either pyridoxine 5'-phosphate (PNP) or pyridoxamine 5'-phosphate (PMP) into pyridoxal 5'-phosphate (PLP). In Bradyrhizobium diazoefficiens (strain JCM 10833 / BCRC 13528 / IAM 13628 / NBRC 14792 / USDA 110), this protein is Pyridoxine/pyridoxamine 5'-phosphate oxidase.